The following is a 174-amino-acid chain: Disulfide bond formation protein B (174 aa).

The Cytoplasmic portion of the chain corresponds to 1–12 (MLNWIDTAPRRI). A helical membrane pass occupies residues 13-29 (LALISAACVAMLAFGMY). Topologically, residues 30–47 (LQHVVGLEPCPMCIVQRY) are periplasmic. Cys-39 and Cys-42 are joined by a disulfide. The helical transmembrane segment at 48-64 (ALIGVAVFAGLASARGQ) threads the bilayer. Topologically, residues 65–69 (KGWWM) are cytoplasmic. The helical transmembrane segment at 70–87 (TWSVLALVAAGFGAFVAA) threads the bilayer. The Periplasmic segment spans residues 88 to 143 (RQSWLQWYPPEIATCGRDFYGMIENYPISRAIPMIFRGSGDCTAVDWTFLGGSIAN). Cys-102 and Cys-129 are disulfide-bonded. The helical transmembrane segment at 144–162 (WSFVWFLLFAVLLLVLLVR) threads the bilayer. Over 163-174 (GGRGAPDTLARA) the chain is Cytoplasmic.

The protein belongs to the DsbB family.

The protein localises to the cell inner membrane. Functionally, required for disulfide bond formation in some periplasmic proteins. Acts by oxidizing the DsbA protein. The sequence is that of Disulfide bond formation protein B from Acidovorax sp. (strain JS42).